The following is a 147-amino-acid chain: Formiminotransferase N-terminal subdomain-containing protein (147 aa).

The N-terminal stretch at methionine 1 to alanine 20 is a signal peptide.

The protein belongs to the formiminotransferase family. Widely expressed with highest levels in liver and skeletal muscle, and moderate levels in kidney, bone and pancreas.

This is Formiminotransferase N-terminal subdomain-containing protein (FTCDNL1) from Homo sapiens (Human).